A 340-amino-acid chain; its full sequence is Cell invasion protein SipD (340 aa).

Disordered regions lie at residues 1–26 and 57–76; these read MLNI…PSAS and QAQQ…NDER. A coiled-coil region spans residues 291–319; sequence FKAQEENLKTTLQTLTQKYSNANSLYDNL.

Belongs to the invasin protein D family.

It localises to the secreted. In terms of biological role, required for translocation of effector proteins via the type III secretion system SPI-1, which is essential for an efficient bacterial internalization. Probably acts by modulating the secretion of SipA, SipB, and SipC. The protein is Cell invasion protein SipD (sipD) of Salmonella typhi.